A 220-amino-acid polypeptide reads, in one-letter code: UPF0758 protein Asuc_0013 (220 aa).

The 123-residue stretch at 98–220 (EFTNPLTVRL…YFSFAEQDWL (123 aa)) folds into the MPN domain. Zn(2+) is bound by residues His-169, His-171, and Asp-182. The short motif at 169 to 182 (HNHPSGSAEPSASD) is the JAMM motif element.

It belongs to the UPF0758 family.

The protein is UPF0758 protein Asuc_0013 of Actinobacillus succinogenes (strain ATCC 55618 / DSM 22257 / CCUG 43843 / 130Z).